Reading from the N-terminus, the 319-residue chain is 4-diphosphocytidyl-2-C-methyl-D-erythritol kinase (319 aa).

Lysine 21 is a catalytic residue. An ATP-binding site is contributed by 106–116 (PIGAGLAGGSS). Aspartate 148 is a catalytic residue.

It belongs to the GHMP kinase family. IspE subfamily.

It catalyses the reaction 4-CDP-2-C-methyl-D-erythritol + ATP = 4-CDP-2-C-methyl-D-erythritol 2-phosphate + ADP + H(+). It participates in isoprenoid biosynthesis; isopentenyl diphosphate biosynthesis via DXP pathway; isopentenyl diphosphate from 1-deoxy-D-xylulose 5-phosphate: step 3/6. Catalyzes the phosphorylation of the position 2 hydroxy group of 4-diphosphocytidyl-2C-methyl-D-erythritol. This Prochlorococcus marinus (strain MIT 9313) protein is 4-diphosphocytidyl-2-C-methyl-D-erythritol kinase.